A 259-amino-acid chain; its full sequence is Global transcriptional regulator CodY (259 aa).

The tract at residues 1–155 (MDLLSRARKI…GATVVGMEIL (155 aa)) is GAF domain. Residues 203 to 222 (ASKIADRVGITRSVIVNALR) constitute a DNA-binding region (H-T-H motif). Serine 215 carries the phosphoserine modification.

The protein belongs to the CodY family.

The protein localises to the cytoplasm. Functionally, DNA-binding global transcriptional regulator which is involved in the adaptive response to starvation and acts by directly or indirectly controlling the expression of numerous genes in response to nutrient availability. During rapid exponential growth, CodY is highly active and represses genes whose products allow adaptation to nutrient depletion. The protein is Global transcriptional regulator CodY of Oceanobacillus iheyensis (strain DSM 14371 / CIP 107618 / JCM 11309 / KCTC 3954 / HTE831).